The primary structure comprises 389 residues: S-adenosylmethionine synthase (389 aa).

His15 serves as a coordination point for ATP. Mg(2+) is bound at residue Asp17. Glu43 contributes to the K(+) binding site. The L-methionine site is built by Glu56 and Gln99. The tract at residues 99–109 (QSPDIAQGVNE) is flexible loop. Residues 166-168 (DAK), 234-235 (RF), Asp243, 249-250 (RK), Ala266, and Lys270 each bind ATP. Asp243 lines the L-methionine pocket. Position 274 (Lys274) interacts with L-methionine.

Belongs to the AdoMet synthase family. In terms of assembly, homotetramer; dimer of dimers. Requires Mg(2+) as cofactor. The cofactor is K(+).

The protein resides in the cytoplasm. It catalyses the reaction L-methionine + ATP + H2O = S-adenosyl-L-methionine + phosphate + diphosphate. Its pathway is amino-acid biosynthesis; S-adenosyl-L-methionine biosynthesis; S-adenosyl-L-methionine from L-methionine: step 1/1. Catalyzes the formation of S-adenosylmethionine (AdoMet) from methionine and ATP. The overall synthetic reaction is composed of two sequential steps, AdoMet formation and the subsequent tripolyphosphate hydrolysis which occurs prior to release of AdoMet from the enzyme. This is S-adenosylmethionine synthase from Neisseria meningitidis serogroup A / serotype 4A (strain DSM 15465 / Z2491).